The following is a 363-amino-acid chain: Protein-glutamate methylesterase/protein-glutamine glutaminase 2 (363 aa).

A Response regulatory domain is found at 6–123; sequence RVLIVDDSAS…AQFLLESKIH (118 aa). A 4-aspartylphosphate modification is found at Asp57. A CheB-type methylesterase domain is found at 172 to 363; the sequence is ARTTESVICI…AMEILRAGNR (192 aa). Residues Ser184, His210, and Asp306 contribute to the active site.

This sequence belongs to the CheB family. Phosphorylated by CheA. Phosphorylation of the N-terminal regulatory domain activates the methylesterase activity.

Its subcellular location is the cytoplasm. It carries out the reaction [protein]-L-glutamate 5-O-methyl ester + H2O = L-glutamyl-[protein] + methanol + H(+). The enzyme catalyses L-glutaminyl-[protein] + H2O = L-glutamyl-[protein] + NH4(+). Functionally, involved in chemotaxis. Part of a chemotaxis signal transduction system that modulates chemotaxis in response to various stimuli. Catalyzes the demethylation of specific methylglutamate residues introduced into the chemoreceptors (methyl-accepting chemotaxis proteins or MCP) by CheR. Also mediates the irreversible deamidation of specific glutamine residues to glutamic acid. The sequence is that of Protein-glutamate methylesterase/protein-glutamine glutaminase 2 from Rhodospirillum rubrum (strain ATCC 11170 / ATH 1.1.1 / DSM 467 / LMG 4362 / NCIMB 8255 / S1).